The primary structure comprises 237 residues: Glucosamine-6-phosphate deaminase (237 aa).

The Proton acceptor; for enolization step role is filled by aspartate 67. The active-site For ring-opening step is asparagine 136. The active-site Proton acceptor; for ring-opening step is histidine 138. Glutamate 143 functions as the For ring-opening step in the catalytic mechanism.

This sequence belongs to the glucosamine/galactosamine-6-phosphate isomerase family. NagB subfamily.

The catalysed reaction is alpha-D-glucosamine 6-phosphate + H2O = beta-D-fructose 6-phosphate + NH4(+). The protein operates within amino-sugar metabolism; N-acetylneuraminate degradation; D-fructose 6-phosphate from N-acetylneuraminate: step 5/5. Functionally, catalyzes the reversible isomerization-deamination of glucosamine 6-phosphate (GlcN6P) to form fructose 6-phosphate (Fru6P) and ammonium ion. This chain is Glucosamine-6-phosphate deaminase, found in Lysinibacillus sphaericus (strain C3-41).